Here is a 456-residue protein sequence, read N- to C-terminus: Protein disulfide-isomerase TMX3 (456 aa).

Positions 1–29 (MANAVGRRSWAALRLCAAVILLDLAVCKG) are cleaved as a signal peptide. Residues 30 to 131 (FVEDLNESFK…KDDIIEFAHR (102 aa)) enclose the Thioredoxin domain. The Lumenal portion of the chain corresponds to 30-378 (FVEDLNESFK…TIVSIFKSSP (349 aa)). Residue asparagine 35 is glycosylated (N-linked (GlcNAc...) asparagine). Catalysis depends on nucleophile residues cysteine 56 and cysteine 59. A disulfide bridge connects residues cysteine 56 and cysteine 59. N-linked (GlcNAc...) asparagine glycans are attached at residues asparagine 261 and asparagine 316. A helical membrane pass occupies residues 379–399 (LMGCFLFGLPLGVISIMCYGI). Over 400–456 (YTADTDGGYIEERYEVSKSEMENQEQIEESKEQESSSGGSLAPTVQEPKDVLEKKKD) the chain is Cytoplasmic. Residues 416-456 (SKSEMENQEQIEESKEQESSSGGSLAPTVQEPKDVLEKKKD) are disordered. Residues 446 to 456 (EPKDVLEKKKD) show a composition bias toward basic and acidic residues. Residues 453 to 456 (KKKD) carry the Di-lysine motif motif.

This sequence belongs to the protein disulfide isomerase family.

Its subcellular location is the endoplasmic reticulum membrane. It catalyses the reaction Catalyzes the rearrangement of -S-S- bonds in proteins.. Functionally, probable disulfide isomerase, which participates in the folding of proteins containing disulfide bonds. May act as a dithiol oxidase. Acts as a regulator of endoplasmic reticulum-mitochondria contact sites via its ability to regulate redox signals. This Mus musculus (Mouse) protein is Protein disulfide-isomerase TMX3 (Tmx3).